The primary structure comprises 235 residues: Segregation and condensation protein A (235 aa).

The protein belongs to the ScpA family. As to quaternary structure, component of a cohesin-like complex composed of ScpA, ScpB and the Smc homodimer, in which ScpA and ScpB bind to the head domain of Smc. The presence of the three proteins is required for the association of the complex with DNA.

It is found in the cytoplasm. Functionally, participates in chromosomal partition during cell division. May act via the formation of a condensin-like complex containing Smc and ScpB that pull DNA away from mid-cell into both cell halves. The chain is Segregation and condensation protein A from Streptococcus equi subsp. zooepidemicus (strain H70).